The primary structure comprises 315 residues: Nucleotide-binding protein PsycPRwf_2129 (315 aa).

Position 29-36 (29-36 (GRSGSGKT)) interacts with ATP. 79-82 (DIRT) contacts GTP.

The protein belongs to the RapZ-like family.

Functionally, displays ATPase and GTPase activities. The sequence is that of Nucleotide-binding protein PsycPRwf_2129 from Psychrobacter sp. (strain PRwf-1).